A 125-amino-acid chain; its full sequence is MIYGTGVDIVEIARFEKFLQQGNDALFDRIFTPSEIEYCSSKKHSAQHYALRFAAKESFLKALGTGLRDGISWKDMEVVNDQLGKPELKLYRRAEELFRQAGLGACFLSLSHDAGCAVAMVVLER.

Mg(2+)-binding residues include Asp8 and Glu57.

Belongs to the P-Pant transferase superfamily. AcpS family. Mg(2+) is required as a cofactor.

It is found in the cytoplasm. It carries out the reaction apo-[ACP] + CoA = holo-[ACP] + adenosine 3',5'-bisphosphate + H(+). Transfers the 4'-phosphopantetheine moiety from coenzyme A to a Ser of acyl-carrier-protein. In Geobacter sp. (strain M21), this protein is Holo-[acyl-carrier-protein] synthase.